The primary structure comprises 707 residues: Polyribonucleotide nucleotidyltransferase (707 aa).

Residues D484 and D490 each contribute to the Mg(2+) site. In terms of domain architecture, KH spans 551 to 610; sequence PRVVRMVVNPEKIRDIIGPAGKTITKIISETGVKIDIEEDGRLYITAPNLEAGERAKQMI. In terms of domain architecture, S1 motif spans 620–688; the sequence is GGIYLGKVLR…KLGRIVLSRK (69 aa). Residues 688-707 form a disordered region; sequence KDAMPDEEESDNRKSDNRKK. Residues 698–707 show a composition bias toward basic and acidic residues; it reads DNRKSDNRKK.

It belongs to the polyribonucleotide nucleotidyltransferase family. It depends on Mg(2+) as a cofactor.

Its subcellular location is the cytoplasm. It carries out the reaction RNA(n+1) + phosphate = RNA(n) + a ribonucleoside 5'-diphosphate. Functionally, involved in mRNA degradation. Catalyzes the phosphorolysis of single-stranded polyribonucleotides processively in the 3'- to 5'-direction. This chain is Polyribonucleotide nucleotidyltransferase, found in Caldanaerobacter subterraneus subsp. tengcongensis (strain DSM 15242 / JCM 11007 / NBRC 100824 / MB4) (Thermoanaerobacter tengcongensis).